The chain runs to 339 residues: SVP1-like protein 2 (339 aa).

WD repeat units follow at residues 177-217 (AHAN…LVRE) and 222-261 (LDRT…ENKR).

It belongs to the WD repeat PROPPIN family.

The protein localises to the vacuole membrane. It localises to the cytoplasmic vesicle membrane. Its function is as follows. Involved in mitochondrial or peroxisomal functions and amino acid signaling pathways. This Kluyveromyces lactis (strain ATCC 8585 / CBS 2359 / DSM 70799 / NBRC 1267 / NRRL Y-1140 / WM37) (Yeast) protein is SVP1-like protein 2 (HSV2).